We begin with the raw amino-acid sequence, 351 residues long: 1-acylglycerol-3-phosphate O-acyltransferase ABHD5 (351 aa).

The 106-residue stretch at 79–184 (PLVLLHGFGG…LILVEPWGFP (106 aa)) folds into the AB hydrolase-1 domain. S124 is modified (phosphoserine). The short motif at 329–334 (HYVYAD) is the HXXXXD motif element.

It belongs to the peptidase S33 family. ABHD4/ABHD5 subfamily. Interacts with ADRP and PLIN. Interacts with PNPLA2. Interacts with PLIN5; promotes interaction with PNPLA2.

The protein resides in the cytoplasm. The protein localises to the lipid droplet. The enzyme catalyses a 1-acyl-sn-glycero-3-phosphate + an acyl-CoA = a 1,2-diacyl-sn-glycero-3-phosphate + CoA. The catalysed reaction is 1-(9Z-octadecenoyl)-sn-glycero-3-phosphate + (9Z)-octadecenoyl-CoA = 1,2-di-(9Z-octadecenoyl)-sn-glycero-3-phosphate + CoA. It catalyses the reaction 1-(9Z-octadecenoyl)-sn-glycero-3-phosphate + hexadecanoyl-CoA = 1-(9Z)-octadecenoyl-2-hexadecanoyl-sn-glycero-3-phosphate + CoA. It carries out the reaction 1-(9Z-octadecenoyl)-sn-glycero-3-phosphate + octadecanoyl-CoA = 1-(9Z-octadecenoyl)-2-octadecanoyl-sn-glycero-3-phosphate + CoA. The enzyme catalyses 1-(9Z-octadecenoyl)-sn-glycero-3-phosphate + (5Z,8Z,11Z,14Z)-eicosatetraenoyl-CoA = 1-(9Z)-octadecenoyl-2-(5Z,8Z,11Z,14Z)-eicosatetraenoyl-sn-glycero-3-phosphate + CoA. The catalysed reaction is eicosanoyl-CoA + 1-(9Z-octadecenoyl)-sn-glycero-3-phosphate = 1-(9Z)-octadecenoyl-2-eicosanoyl-sn-glycero-3-phosphate + CoA. It catalyses the reaction 1-hexadecanoyl-sn-glycero-3-phosphate + (9Z)-octadecenoyl-CoA = 1-hexadecanoyl-2-(9Z-octadecenoyl)-sn-glycero-3-phosphate + CoA. It carries out the reaction 1-octadecanoyl-sn-glycero-3-phosphate + (9Z)-octadecenoyl-CoA = 1-octadecanoyl-2-(9Z-octadecenoyl)-sn-glycero-3-phosphate + CoA. The enzyme catalyses 1-(5Z,8Z,11Z,14Z-eicosatetraenoyl)-sn-glycero-3-phosphate + (9Z)-octadecenoyl-CoA = 1-(5Z,8Z,11Z,14Z)-eicosatetraenoyl-2-(9Z)-octadecenoyl-sn-glycero-3-phosphate + CoA. Its activity is regulated as follows. Acyltransferase activity is inhibited by detergents such as Triton X-100 and 3-[(3-cholamidopropyl)dimethylammonio]-1-propanesulfonate (CHAPS). Acyltransferase activity is inhibited by the presence of magnesium and calcium. Coenzyme A-dependent lysophosphatidic acid acyltransferase that catalyzes the transfer of an acyl group on a lysophosphatidic acid. Functions preferentially with 1-oleoyl-lysophosphatidic acid followed by 1-palmitoyl-lysophosphatidic acid, 1-stearoyl-lysophosphatidic acid and 1-arachidonoyl-lysophosphatidic acid as lipid acceptor. Functions preferentially with arachidonoyl-CoA followed by oleoyl-CoA as acyl group donors. Functions in phosphatidic acid biosynthesis. May regulate the cellular storage of triacylglycerol through activation of the phospholipase PNPLA2. Involved in keratinocyte differentiation. Regulates lipid droplet fusion. This is 1-acylglycerol-3-phosphate O-acyltransferase ABHD5 from Rattus norvegicus (Rat).